The sequence spans 65 residues: Photosystem II reaction center protein J (65 aa).

The helical transmembrane segment at leucine 35–tyrosine 55 threads the bilayer.

The protein belongs to the PsbJ family. In terms of assembly, PSII is composed of 1 copy each of membrane proteins PsbA, PsbB, PsbC, PsbD, PsbE, PsbF, PsbH, PsbI, PsbJ, PsbK, PsbL, PsbM, PsbT, PsbX, PsbY, Psb30/Ycf12, peripheral proteins PsbO, CyanoQ (PsbQ), PsbU, PsbV and a large number of cofactors. It forms dimeric complexes.

It localises to the cellular thylakoid membrane. Its function is as follows. One of the components of the core complex of photosystem II (PSII). PSII is a light-driven water:plastoquinone oxidoreductase that uses light energy to abstract electrons from H(2)O, generating O(2) and a proton gradient subsequently used for ATP formation. It consists of a core antenna complex that captures photons, and an electron transfer chain that converts photonic excitation into a charge separation. This is Photosystem II reaction center protein J from Prochlorococcus marinus (strain MIT 9312).